Reading from the N-terminus, the 638-residue chain is Eukaryotic translation initiation factor 2A (638 aa).

WD repeat units lie at residues 287 to 329 (SKEG…FDFG) and 331 to 370 (GPRN…KLAN). The span at 441-450 (KITKAKHEGI) shows a compositional bias: basic and acidic residues. A disordered region spans residues 441-593 (KITKAKHEGI…SDKERKIRSV (153 aa)). The residue at position 463 (Thr463) is a Phosphothreonine. The segment covering 492–501 (AAAGGVNGNK) has biased composition (low complexity). Residues 583-593 (ISDKERKIRSV) show a composition bias toward basic and acidic residues.

This sequence belongs to the WD repeat EIF2A family.

Functionally, functions in the early steps of protein synthesis of a small number of specific mRNAs. Acts by directing the binding of methionyl-tRNAi to 40S ribosomal subunits. In contrast to the eIF-2 complex, it binds methionyl-tRNAi to 40S subunits in a codon-dependent manner, whereas the eIF-2 complex binds methionyl-tRNAi to 40S subunits in a GTP-dependent manner. The protein is Eukaryotic translation initiation factor 2A of Drosophila melanogaster (Fruit fly).